A 261-amino-acid polypeptide reads, in one-letter code: Early 39 kDa protein (261 aa).

The segment at 215-261 (SYVPTPVSNKKRRAPPSAPKKIAKQRRDTKPPPTYVSDNTQDTNMSE) is disordered. Residues 250–261 (VSDNTQDTNMSE) are compositionally biased toward polar residues.

In Orgyia pseudotsugata multicapsid polyhedrosis virus (OpMNPV), this protein is Early 39 kDa protein.